Consider the following 503-residue polypeptide: Cytochrome P450 3A15 (503 aa).

Cysteine 442 lines the heme pocket.

It belongs to the cytochrome P450 family. It depends on heme as a cofactor.

The protein localises to the endoplasmic reticulum membrane. Its subcellular location is the microsome membrane. It catalyses the reaction an organic molecule + reduced [NADPH--hemoprotein reductase] + O2 = an alcohol + oxidized [NADPH--hemoprotein reductase] + H2O + H(+). Cytochromes P450 are a group of heme-thiolate monooxygenases. In liver microsomes, this enzyme is involved in an NADPH-dependent electron transport pathway. It oxidizes a variety of structurally unrelated compounds, including steroids, fatty acids, and xenobiotics. This Cavia porcellus (Guinea pig) protein is Cytochrome P450 3A15 (CYP3A15).